The chain runs to 869 residues: MIDVISRYQASPLIESTLGYQSITIIFGNAHLQSSKKNVILAAMMRTRIPGLVPRICQTPLPWKPPTQLTRVRYARWSTSHAVSWFETGHIDLKENEGLLFINNIFPSKLQWLLRGPLGGMRSYEEAVKRIDRPQLAASDTFQIIQRVVPKNLNIQVKEVVPRFREGGAFVKYTRPSNVNDADIEASIKENLKEHPIRPWFNPFQEVQVCRVIGRPWIEDLYRLPSPRLKVAFHPVSPEASAADLNTETLYTLFRPYGKIRDIEKQPSDSKVTPRYAFVEFSRPKYAGMAKNCMHGFTVPEQEGGGKSGTRLKIKYERKIKLSMIKDWLLSHPRIVIPVLAALLAAITVTIFDPMRTFFIKLKIKSTLQTEENGVMQWIRKQVNKANIIYFGRKGADPRGLTAIWEDRQEDITRLQSWLMENVETFIVVHGPRGSGKRELVLDRALVDYKYKIVIDCKQIQDARGDSAKIARAASQVGYRPVFSWMNSISSFIDLAAQGMIGTKAGFSETLDAQLSNIWQNTATALKKVTLEHRKKNHKDSHLTDEEYLEAHPELRPVVVIDNYLHNASESSVVYDKITEWAAGLTAGNIAHVIFLTTDVSYAKPLSKALPNSVFRTITLGDCSLEVGRKFVVNHLAYESKDGKTQPRRAEELEDLDACIETLGGRVTDLEFMAHRIEAGETPRGAVNRIIEQSASEILKMFLLTPETIEQSWTHEQAWYLIKRLAESKDGALSYNEIVLSELFKENGEITLRALEHAELISIAAVNGCPQTIRPGKPVLRAAFKKVTENKALSSRMDLAIITQKINKENKSIGKYEEELSLLGSLPRQPRELTDRIQWVLNKVYSSQNKIAKYEKESAYLQKILRSEH.

The region spanning proline 227–lysine 319 is the RRM domain. The chain crosses the membrane as a helical span at residues isoleucine 335–methionine 355. Residues arginine 356–histidine 869 lie on the Mitochondrial intermembrane side of the membrane.

This sequence belongs to the YME2 family.

The protein localises to the mitochondrion inner membrane. Plays a role in maintaining the mitochondrial genome and in controlling the mtDNA escape. Involved in the regulation of mtDNA nucleotide structure and number. May have a dispensable role in early maturation of pre-rRNA. The chain is Mitochondrial escape protein 2 (yme2) from Neosartorya fischeri (strain ATCC 1020 / DSM 3700 / CBS 544.65 / FGSC A1164 / JCM 1740 / NRRL 181 / WB 181) (Aspergillus fischerianus).